We begin with the raw amino-acid sequence, 1308 residues long: Transposon TX1 uncharacterized 149 kDa protein (1308 aa).

The Reverse transcriptase domain maps to 494–765 (EAFKKGELPL…KIIKYLGVYL (272 aa)).

The chain is Transposon TX1 uncharacterized 149 kDa protein from Xenopus laevis (African clawed frog).